A 524-amino-acid polypeptide reads, in one-letter code: Peptide chain release factor 3 (524 aa).

Residues 9-275 (QRRRTFAIIS…AVVELSPPPL (267 aa)) enclose the tr-type G domain. GTP is bound by residues 18 to 25 (SHPDAGKT), 86 to 90 (DTPGH), and 140 to 143 (NKLD).

Belongs to the TRAFAC class translation factor GTPase superfamily. Classic translation factor GTPase family. PrfC subfamily.

It is found in the cytoplasm. Increases the formation of ribosomal termination complexes and stimulates activities of RF-1 and RF-2. It binds guanine nucleotides and has strong preference for UGA stop codons. It may interact directly with the ribosome. The stimulation of RF-1 and RF-2 is significantly reduced by GTP and GDP, but not by GMP. The chain is Peptide chain release factor 3 from Methylobacillus flagellatus (strain ATCC 51484 / DSM 6875 / VKM B-1610 / KT).